A 355-amino-acid polypeptide reads, in one-letter code: RNA 3'-terminal phosphate cyclase (355 aa).

ATP is bound by residues Gln-100 and 300 to 304; that span reads HLADQ. The Tele-AMP-histidine intermediate role is filled by His-325.

The protein belongs to the RNA 3'-terminal cyclase family. Type 1 subfamily.

The protein resides in the cytoplasm. The catalysed reaction is a 3'-end 3'-phospho-ribonucleotide-RNA + ATP = a 3'-end 2',3'-cyclophospho-ribonucleotide-RNA + AMP + diphosphate. Its function is as follows. Catalyzes the conversion of 3'-phosphate to a 2',3'-cyclic phosphodiester at the end of RNA. The mechanism of action of the enzyme occurs in 3 steps: (A) adenylation of the enzyme by ATP; (B) transfer of adenylate to an RNA-N3'P to produce RNA-N3'PP5'A; (C) and attack of the adjacent 2'-hydroxyl on the 3'-phosphorus in the diester linkage to produce the cyclic end product. The biological role of this enzyme is unknown but it is likely to function in some aspects of cellular RNA processing. This chain is RNA 3'-terminal phosphate cyclase, found in Methanosarcina acetivorans (strain ATCC 35395 / DSM 2834 / JCM 12185 / C2A).